We begin with the raw amino-acid sequence, 277 residues long: Diaminopimelate epimerase (277 aa).

Residues N15, Q48, and N66 each contribute to the substrate site. The active-site Proton donor is the C75. Residues 76-77 (GN), N156, N189, and 207-208 (ER) contribute to the substrate site. Residue C216 is the Proton acceptor of the active site. 217–218 (GS) is a binding site for substrate.

The protein belongs to the diaminopimelate epimerase family. In terms of assembly, homodimer.

It is found in the cytoplasm. It carries out the reaction (2S,6S)-2,6-diaminopimelate = meso-2,6-diaminopimelate. The protein operates within amino-acid biosynthesis; L-lysine biosynthesis via DAP pathway; DL-2,6-diaminopimelate from LL-2,6-diaminopimelate: step 1/1. Functionally, catalyzes the stereoinversion of LL-2,6-diaminopimelate (L,L-DAP) to meso-diaminopimelate (meso-DAP), a precursor of L-lysine and an essential component of the bacterial peptidoglycan. This chain is Diaminopimelate epimerase, found in Acidiphilium cryptum (strain JF-5).